The following is a 201-amino-acid chain: UPF0301 protein Mvan_6057 (201 aa).

The protein belongs to the UPF0301 (AlgH) family.

This Mycolicibacterium vanbaalenii (strain DSM 7251 / JCM 13017 / BCRC 16820 / KCTC 9966 / NRRL B-24157 / PYR-1) (Mycobacterium vanbaalenii) protein is UPF0301 protein Mvan_6057.